We begin with the raw amino-acid sequence, 318 residues long: Aspartate carbamoyltransferase catalytic subunit (318 aa).

Residues arginine 57 and threonine 58 each coordinate carbamoyl phosphate. Lysine 85 is an L-aspartate binding site. Positions 107, 141, and 144 each coordinate carbamoyl phosphate. L-aspartate-binding residues include arginine 174 and arginine 228. Carbamoyl phosphate contacts are provided by glycine 269 and proline 270.

This sequence belongs to the aspartate/ornithine carbamoyltransferase superfamily. ATCase family. In terms of assembly, heterododecamer (2C3:3R2) of six catalytic PyrB chains organized as two trimers (C3), and six regulatory PyrI chains organized as three dimers (R2).

It carries out the reaction carbamoyl phosphate + L-aspartate = N-carbamoyl-L-aspartate + phosphate + H(+). It participates in pyrimidine metabolism; UMP biosynthesis via de novo pathway; (S)-dihydroorotate from bicarbonate: step 2/3. Catalyzes the condensation of carbamoyl phosphate and aspartate to form carbamoyl aspartate and inorganic phosphate, the committed step in the de novo pyrimidine nucleotide biosynthesis pathway. This chain is Aspartate carbamoyltransferase catalytic subunit, found in Mycolicibacterium smegmatis (strain ATCC 700084 / mc(2)155) (Mycobacterium smegmatis).